We begin with the raw amino-acid sequence, 340 residues long: S-adenosylmethionine:tRNA ribosyltransferase-isomerase (340 aa).

It belongs to the QueA family. In terms of assembly, monomer.

The protein resides in the cytoplasm. It carries out the reaction 7-aminomethyl-7-carbaguanosine(34) in tRNA + S-adenosyl-L-methionine = epoxyqueuosine(34) in tRNA + adenine + L-methionine + 2 H(+). The protein operates within tRNA modification; tRNA-queuosine biosynthesis. Its function is as follows. Transfers and isomerizes the ribose moiety from AdoMet to the 7-aminomethyl group of 7-deazaguanine (preQ1-tRNA) to give epoxyqueuosine (oQ-tRNA). The sequence is that of S-adenosylmethionine:tRNA ribosyltransferase-isomerase from Chromobacterium violaceum (strain ATCC 12472 / DSM 30191 / JCM 1249 / CCUG 213 / NBRC 12614 / NCIMB 9131 / NCTC 9757 / MK).